We begin with the raw amino-acid sequence, 729 residues long: Fatty acid oxidation complex subunit alpha (729 aa).

The segment at 1 to 189 (MLYKGDTLYL…KIGLVDGVVK (189 aa)) is enoyl-CoA hydratase/isomerase. Asp-296 is a substrate binding site. Residues 311–729 (ETPKQAAVLG…ARPVGDLKTA (419 aa)) form a 3-hydroxyacyl-CoA dehydrogenase region. Residues Met-324, Asp-343, 400–402 (VVE), Lys-407, and Ser-429 each bind NAD(+). His-450 serves as the catalytic For 3-hydroxyacyl-CoA dehydrogenase activity. Asn-453 is an NAD(+) binding site. Substrate contacts are provided by Asn-500 and Tyr-660. Residues 707 to 729 (ARHNEPYYPPVEPARPVGDLKTA) are disordered.

The protein in the N-terminal section; belongs to the enoyl-CoA hydratase/isomerase family. This sequence in the C-terminal section; belongs to the 3-hydroxyacyl-CoA dehydrogenase family. In terms of assembly, heterotetramer of two alpha chains (FadB) and two beta chains (FadA).

The enzyme catalyses a (3S)-3-hydroxyacyl-CoA + NAD(+) = a 3-oxoacyl-CoA + NADH + H(+). The catalysed reaction is a (3S)-3-hydroxyacyl-CoA = a (2E)-enoyl-CoA + H2O. It carries out the reaction a 4-saturated-(3S)-3-hydroxyacyl-CoA = a (3E)-enoyl-CoA + H2O. It catalyses the reaction (3S)-3-hydroxybutanoyl-CoA = (3R)-3-hydroxybutanoyl-CoA. The enzyme catalyses a (3Z)-enoyl-CoA = a 4-saturated (2E)-enoyl-CoA. The catalysed reaction is a (3E)-enoyl-CoA = a 4-saturated (2E)-enoyl-CoA. It participates in lipid metabolism; fatty acid beta-oxidation. Its function is as follows. Involved in the aerobic and anaerobic degradation of long-chain fatty acids via beta-oxidation cycle. Catalyzes the formation of 3-oxoacyl-CoA from enoyl-CoA via L-3-hydroxyacyl-CoA. It can also use D-3-hydroxyacyl-CoA and cis-3-enoyl-CoA as substrate. This Escherichia coli O6:K15:H31 (strain 536 / UPEC) protein is Fatty acid oxidation complex subunit alpha.